A 155-amino-acid polypeptide reads, in one-letter code: Microsomal glutathione S-transferase 1 (155 aa).

Over 3-9 (DLRQLMD) the chain is Lumenal. A helical membrane pass occupies residues 10 to 33 (NEVLMAFTSYATIILTKMMFMSSA). The Cytoplasmic portion of the chain corresponds to 34–62 (TAFQRITNKVFANPEDCAGFGKGENAKKF). A glutathione-binding site is contributed by Arg-38. N6-acetyllysine is present on residues Lys-42, Lys-55, and Lys-60. Residues 63 to 96 (VRTDEKVERVRRAHLNDLENIVPFLGIGLLYSLS) traverse the membrane as a helical segment. Positions 73, 74, 76, and 81 each coordinate glutathione. Over 97-99 (GPD) the chain is Lumenal. A helical transmembrane segment spans residues 100–123 (LSTALMHFRIFVGARIYHTIAYLT). Residue Tyr-121 participates in glutathione binding. Residues 124 to 128 (PLPQP) lie on the Cytoplasmic side of the membrane. Residues 129–148 (NRGLAFFVGYGVTLSMAYRL) traverse the membrane as a helical segment. Over 149 to 155 (LRSRLYL) the chain is Lumenal.

It belongs to the MAPEG family. Homotrimer; The trimer binds only one molecule of glutathione. Post-translationally, acetylation of Lys-42 and Lys-55 is observed in liver mitochondria from fasted mice but not from fed mice. As to expression, expressed in the testes (at protein level).

Its subcellular location is the endoplasmic reticulum membrane. The protein localises to the mitochondrion outer membrane. It carries out the reaction RX + glutathione = an S-substituted glutathione + a halide anion + H(+). Conjugation of reduced glutathione to a wide number of exogenous and endogenous hydrophobic electrophiles. This Mus musculus (Mouse) protein is Microsomal glutathione S-transferase 1 (Mgst1).